We begin with the raw amino-acid sequence, 427 residues long: Zinc finger protein 2 (427 aa).

The KRAB domain occupies 14 to 85 (VTFEDVAVTF…GFHGSEEKTW (72 aa)). The tract at residues 111–142 (HRKQSSLCPKREIQTLTGGPEPEKESPKARTC) is disordered. 8 consecutive C2H2-type zinc fingers follow at residues 169–191 (QECSECGKTFFDHSSLIRHQRTH), 197–219 (YDCPECGKAFSHRSSLSRHLMFH), 225–247 (YECDACGKAFFDRSSLTVHQRIH), 253–275 (FKCNDCGKAFFDRSSLTRHQRIH), 281–303 (YECQQCGKAFSQKSILTRHLLTH), 309–331 (YECRDCGKAFYGVTSLNRHQKVH), 337–359 (YQCSECGKAFFDRSSLTQHQKIH), and 365–387 (YECGECGKAFSQRCRLTRHQRVH). The C2H2-type 9; degenerate zinc-finger motif lies at 393–415 (FECSVCGKEFSSKSSIIQHQRRY).

The protein belongs to the krueppel C2H2-type zinc-finger protein family.

It localises to the nucleus. May be involved in transcriptional regulation. The protein is Zinc finger protein 2 of Mus musculus (Mouse).